The following is a 334-amino-acid chain: D-alanine--D-alanine ligase (334 aa).

The ATP-grasp domain occupies 121–327 (KLWYDALDIP…FSEFLVQCVT (207 aa)). Residue 151–206 (AFGHWGSIFVKAARQGSSVGCYKVTTEDQIAPAIEAAFGFSEQVLVEQAVKPRELE) coordinates ATP. Residues Asp-281, Glu-294, and Asn-296 each contribute to the Mg(2+) site.

It belongs to the D-alanine--D-alanine ligase family. Requires Mg(2+) as cofactor. The cofactor is Mn(2+).

The protein localises to the cytoplasm. It carries out the reaction 2 D-alanine + ATP = D-alanyl-D-alanine + ADP + phosphate + H(+). It functions in the pathway cell wall biogenesis; peptidoglycan biosynthesis. In terms of biological role, cell wall formation. In Vibrio cholerae serotype O1 (strain ATCC 39315 / El Tor Inaba N16961), this protein is D-alanine--D-alanine ligase.